We begin with the raw amino-acid sequence, 369 residues long: Spore membrane assembly protein 2 (369 aa).

The Cytoplasmic segment spans residues 1–6 (MLFPKR). The chain crosses the membrane as a helical span at residues 7-27 (LIVWGVLLILSLSQFVLYLPA). At 28–220 (TTCTNSKGLR…NLAFILMMFN (193 aa)) the chain is on the lumenal side. The helical transmembrane segment at 221 to 241 (GMVFYFAVLEIIVGFLSICVV) threads the bilayer. Over 242 to 265 (SAFGGALSVGKRHRLFPILLKSSS) the chain is Cytoplasmic. A helical transmembrane segment spans residues 266-286 (SILVVIATLTILCNIVYLIAL). Over 287–319 (KTLEPEEVTDVGSDNAAVHTTGWELLKVNVGSG) the chain is Lumenal. A helical membrane pass occupies residues 320-340 (FIMGLARYAIQWVLLVLAFLA). The Cytoplasmic segment spans residues 341–369 (ANHYKAKPKKSDKYTEDTSNSPSPDLMEK). Residues 348 to 369 (PKKSDKYTEDTSNSPSPDLMEK) are disordered.

Belongs to the SMA2 family.

It localises to the prospore membrane. It is found in the endoplasmic reticulum. Functionally, involved in spore and ascus formation. Required for the efficient assembly of the precursors of the prospore membrane to a continuous prospore membrane. The protein is Spore membrane assembly protein 2 (SMA2) of Saccharomyces cerevisiae (strain YJM789) (Baker's yeast).